Reading from the N-terminus, the 578-residue chain is Triokinase/FMN cyclase (578 aa).

The region spanning 9-336 is the DhaK domain; the sequence is SVEGCAGDAL…IDAETNAKAW (328 aa). Residues 56-59, Lys109, and Asp114 each bind dihydroxyacetone; that span reads GSGH. His221 acts as the Tele-hemiaminal-histidine intermediate in catalysis. One can recognise a DhaL domain in the interval 372–571; it reads KQMTLVLDRI…AAAIFRAILE (200 aa). Residues 401–404, 446–447, Gly486, and 494–495 each bind ATP; these read DGDC, SS, and TM. Residues Ser511 and Ser545 each carry the phosphoserine modification. Position 556–558 (556–558) interacts with ATP; the sequence is DPG.

Belongs to the dihydroxyacetone kinase (DAK) family. In terms of assembly, homodimer. Interacts with IFIH1 (via the CARD domains), the interaction is inhibited by viral infection. Mg(2+) is required as a cofactor. Mn(2+) serves as cofactor. The cofactor is Co(2+).

It catalyses the reaction dihydroxyacetone + ATP = dihydroxyacetone phosphate + ADP + H(+). It carries out the reaction D-glyceraldehyde + ATP = D-glyceraldehyde 3-phosphate + ADP + H(+). The enzyme catalyses FAD = riboflavin cyclic-4',5'-phosphate + AMP + H(+). Its activity is regulated as follows. Each activity is inhibited by the substrate(s) of the other. Functionally, catalyzes both the phosphorylation of dihydroxyacetone and of glyceraldehyde, and the splitting of ribonucleoside diphosphate-X compounds among which FAD is the best substrate. Represses IFIH1-mediated cellular antiviral response. This is Triokinase/FMN cyclase (Tkfc) from Rattus norvegicus (Rat).